The sequence spans 409 residues: Terpredoxin reductase (409 aa).

7-38 (TTVIVGAGHAGTAAAFFLREFGYHGRVLLLSA) serves as a coordination point for FAD. NAD(+) is bound at residue 151–159 (GGGFIGLEI).

FAD is required as a cofactor.

In terms of biological role, the oxidation of alpha-terpineol by cytochrome p450-TERP requires the participation of a flavoprotein, terpredoxin reductase, and an iron-sulfur protein, terpredoxin, to mediate the transfer of electrons from NADH to P450 for oxygen activation. The chain is Terpredoxin reductase (terPA) from Pseudomonas sp.